A 1342-amino-acid polypeptide reads, in one-letter code: WD repeat-containing protein 19 (1342 aa).

WD repeat units lie at residues 11–51, 52–92, 95–134, 137–175, 273–311, and 317–356; these read TWLG…RSEI, NLPG…TSQL, GMRDQMSFLLWSKVGSFLAVGTVKGNLLIYNHQTSRKIPV, KHTKRITCGCWNAENLLALGGEDKMITVSNQEGDTIRQT, NHKDNLTSIAVSQTLNKVATCGDNCIKIQDLVDLKDMYV, and EENKGLGTLSWTDDGQLLALSTQRGSLHVFLTKLPILGDA. TPR repeat units follow at residues 736 to 769, 775 to 808, 840 to 873, 895 to 928, 951 to 984, and 1020 to 1053; these read AQDLYLASSCPIAALEMRRDLQHWDSALQLAKHL, PFISKEYAIQLEFAGDYVNALAHYEKGITGDNKE, RVLKRDCGAILENMKQFSEAAQLYEKGLYYDKAA, PKIHLQYAKAKEADGRYKEAVVAYENAKQWQSVI, LDGAKMVARFFLQLGDYGSAIQFLVMSKCNNEAF, and EKRYLQAGKFFLLCGQYSRALKHFLKCPSSEDNV.

Component of the IFT complex A (IFT-A) complex. IFT-A complex is divided into a core subcomplex composed of IFT122:IFT140:WDR19 which is associated with TULP3 and a peripheral subcomplex composed of IFT43:WDR35:TTC21B. Interacts (via C-terminal region) with IFT122 (via C-terminal region). Interacts with BBS1. Interacts with TTC25. In terms of tissue distribution, some isoforms are tissue-specific. Highly expressed in the prostate. Lower expression in the cerebellum, pituitary gland, fetal lung, and pancreas. In normal prostate, expressed in both basal and luminal epithelial cells. No expression detected in fibromuscular stromal cells, endothelial cells, or infiltrating lymphocytes. Uniformed expression in prostate adenocarcinoma cells.

Its subcellular location is the cell projection. It is found in the cilium. The protein resides in the cytoplasm. It localises to the cytoskeleton. The protein localises to the cilium basal body. Its subcellular location is the photoreceptor outer segment. It is found in the flagellum. In terms of biological role, as component of the IFT complex A (IFT-A), a complex required for retrograde ciliary transport and entry into cilia of G protein-coupled receptors (GPCRs), it is involved in cilia function and/or assembly. Essential for functional IFT-A assembly and ciliary entry of GPCRs. Associates with the BBSome complex to mediate ciliary transport. In Homo sapiens (Human), this protein is WD repeat-containing protein 19.